The sequence spans 140 residues: Sex-regulated protein janus-B (140 aa).

Arg-42 provides a ligand contact to substrate. The active-site Proton acceptor is His-69. A substrate-binding site is contributed by 110–112 (SRT).

Belongs to the janus family.

In terms of biological role, janA and janB regulate somatic sex differentiation. This is Sex-regulated protein janus-B (janB) from Drosophila erecta (Fruit fly).